We begin with the raw amino-acid sequence, 191 residues long: Putative zinc metalloprotease MJ0611 (191 aa).

A helical transmembrane segment spans residues 20–40 (AIAFIFSYPNFSILVFIISLI). His49 contacts Zn(2+). The active site involves Glu50. Residue His53 coordinates Zn(2+). 4 helical membrane passes run 73–93 (LILG…PGAV), 110–130 (LAGP…MLIF), 133–153 (GSLL…LAGF), and 171–191 (PFIW…MMFW).

It belongs to the peptidase M50B family. Requires Zn(2+) as cofactor.

The protein resides in the cell membrane. The protein is Putative zinc metalloprotease MJ0611 of Methanocaldococcus jannaschii (strain ATCC 43067 / DSM 2661 / JAL-1 / JCM 10045 / NBRC 100440) (Methanococcus jannaschii).